The chain runs to 289 residues: ATP synthase gamma chain (289 aa).

This sequence belongs to the ATPase gamma chain family. F-type ATPases have 2 components, CF(1) - the catalytic core - and CF(0) - the membrane proton channel. CF(1) has five subunits: alpha(3), beta(3), gamma(1), delta(1), epsilon(1). CF(0) has three main subunits: a, b and c.

It is found in the cell inner membrane. Its function is as follows. Produces ATP from ADP in the presence of a proton gradient across the membrane. The gamma chain is believed to be important in regulating ATPase activity and the flow of protons through the CF(0) complex. This is ATP synthase gamma chain from Pasteurella multocida (strain Pm70).